Reading from the N-terminus, the 796-residue chain is Peroxisome proliferator-activated receptor gamma coactivator 1-alpha (796 aa).

Lysine 77 bears the N6-acetyllysine mark. Positions 98–138 (PVDEDGLPSFDALTDGDVTTENEASPSSMPDGTPPPQEAEE) are disordered. The span at 114-127 (DVTTENEASPSSMP) shows a compositional bias: polar residues. Positions 142 to 146 (LKKLL) match the LXXLL motif motif. Lysine 144 carries the N6-acetyllysine modification. Threonine 176 bears the Phosphothreonine; by AMPK mark. An N6-acetyllysine modification is found at lysine 182. Residues 211-275 (YLTTNDDPPH…NDPKGSPFEN (65 aa)) are disordered. Residues 217–235 (DPPHTKPTENRNSSRDKCT) are compositionally biased toward basic and acidic residues. Residues 242–258 (TQSQTQHLQAKPTTLSL) are compositionally biased toward polar residues. 4 positions are modified to N6-acetyllysine: lysine 252, lysine 269, lysine 276, and lysine 319. Disordered regions lie at residues 288–374 (GTAG…AKRP) and 398–452 (TSQE…RKQL). An interaction with PPARG region spans residues 291-337 (GLTPPTTPPHKANQDNPFRASPKLKPSCKTVVPPPSKKARYSESSCT). Positions 332 to 344 (SESSCTQGSNSTK) are enriched in polar residues. 2 positions are modified to N6-acetyllysine: lysine 345 and lysine 411. The tract at residues 348 to 796 (EQSELYAQLS…LKEAQRSLRR (449 aa)) is mediates interaction with RNF34. Residues 401–412 (ELHDSRQLENKD) show a composition bias toward basic and acidic residues. Polar residues-rich tracts occupy residues 413–428 (APSSNGPGQIHSSTDS) and 439–450 (VSRQVSPGSTRK). Lysine 450 bears the N6-acetyllysine mark. Phosphoserine; by AMPK is present on serine 538. 3 disordered regions span residues 542-597 (FNSP…SSSR), 609-637 (HRTHRNSPLCASRSRSPHSRRPRYDSYEE), and 648-667 (YRREYEKRESERAKQRERQR). Positions 562–577 (QRMRSRSRSFSRHRSC) are enriched in basic residues. A compositionally biased stretch (low complexity) spans 578-597 (SRSPYSRSRSRSPGSRSSSR). Residues 675 to 751 (RVIYVGKIRP…TDFELYFCGR (77 aa)) form the RRM domain. 2 positions are modified to N6-acetyllysine: lysine 756 and lysine 777.

In terms of assembly, homooligomer. Interacts with MYBBP1A; inhibits MYBBP1A transcriptional activation. Interacts with PRDM16, LPIN1 and PML. Interacts (via LXXLL motif) with RORA and RORC (via AF-2 motif); activates RORA and RORC transcriptional activation. Interacts with LRPPRC. Interacts with FOXO1. Interacts with NR5A2. Phosphorylation by AMPK in skeletal muscle increases activation of its own promoter. Phosphorylated by CLK2. In terms of processing, heavily acetylated by KAT2A/GCN5 under conditions of high nutrients, leading to inactivation of PPARGC1A. Deacetylated by SIRT1 in low nutrients/high NAD conditions, leading to its activation. Post-translationally, ubiquitinated. Ubiquitination by RNF34 induces proteasomal degradation.

The protein resides in the nucleus. Its subcellular location is the PML body. Its function is as follows. Transcriptional coactivator for steroid receptors and nuclear receptors. Greatly increases the transcriptional activity of PPARG and thyroid hormone receptor on the uncoupling protein promoter. Can regulate key mitochondrial genes that contribute to the program of adaptive thermogenesis. Plays an essential role in metabolic reprogramming in response to dietary availability through coordination of the expression of a wide array of genes involved in glucose and fatty acid metabolism. Acts as a key regulator of gluconeogenesis: stimulates hepatic gluconeogenesis by increasing the expression of gluconeogenic enzymes, and acting together with FOXO1 to promote the fasting gluconeogenic program. Induces the expression of PERM1 in the skeletal muscle in an ESRRA-dependent manner. Also involved in the integration of the circadian rhythms and energy metabolism. Required for oscillatory expression of clock genes, such as BMAL1 and NR1D1, through the coactivation of RORA and RORC, and metabolic genes, such as PDK4 and PEPCK. This is Peroxisome proliferator-activated receptor gamma coactivator 1-alpha (PPARGC1A) from Bos taurus (Bovine).